The following is a 548-amino-acid chain: Probable bifunctional tRNA threonylcarbamoyladenosine biosynthesis protein (548 aa).

Residues 1 to 338 (MRILGIEGTA…FRPDEVAVTW (338 aa)) are kae1. Positions 122 and 126 each coordinate Fe cation. L-threonylcarbamoyladenylate-binding positions include 143 to 147 (NASGA), D175, G188, E192, and N271. Fe cation is bound at residue D299. The Protein kinase domain maps to 349 to 548 (RMGGDEVQGA…DDIEGRGRYQ (200 aa)). ATP contacts are provided by residues 355–362 (VQGAEATV) and K371. Basic and acidic residues predominate over residues 390–404 (ERTRQEARLTSEARR). The interval 390-413 (ERTRQEARLTSEARRNGVPTPLVR) is disordered. The Proton acceptor; for kinase activity role is filled by D460.

It in the N-terminal section; belongs to the KAE1 / TsaD family. The protein in the C-terminal section; belongs to the protein kinase superfamily. Tyr protein kinase family. BUD32 subfamily. As to quaternary structure, component of the KEOPS complex that consists of Kae1, Bud32, Cgi121 and Pcc1; the whole complex dimerizes. It depends on Fe(2+) as a cofactor.

The protein resides in the cytoplasm. It carries out the reaction L-seryl-[protein] + ATP = O-phospho-L-seryl-[protein] + ADP + H(+). The catalysed reaction is L-threonyl-[protein] + ATP = O-phospho-L-threonyl-[protein] + ADP + H(+). It catalyses the reaction L-threonylcarbamoyladenylate + adenosine(37) in tRNA = N(6)-L-threonylcarbamoyladenosine(37) in tRNA + AMP + H(+). Functionally, required for the formation of a threonylcarbamoyl group on adenosine at position 37 (t(6)A37) in tRNAs that read codons beginning with adenine. Is a component of the KEOPS complex that is probably involved in the transfer of the threonylcarbamoyl moiety of threonylcarbamoyl-AMP (TC-AMP) to the N6 group of A37. The Kae1 domain likely plays a direct catalytic role in this reaction. The Bud32 domain probably displays kinase activity that regulates Kae1 function. This chain is Probable bifunctional tRNA threonylcarbamoyladenosine biosynthesis protein, found in Haloarcula marismortui (strain ATCC 43049 / DSM 3752 / JCM 8966 / VKM B-1809) (Halobacterium marismortui).